The following is a 693-amino-acid chain: TGF-beta-activated kinase 1 and MAP3K7-binding protein 2 (693 aa).

Residues 8 to 51 (IDFQVLHDLRQKFPEVPEVVVSRCMLQNNNNLDACCAVLSQEST) enclose the CUE domain. The disordered stretch occupies residues 91-130 (GREGSRMNGSRTLTHSISDGQLQGGQSNSELFQQEPQTAP). The span at 97–130 (MNGSRTLTHSISDGQLQGGQSNSELFQQEPQTAP) shows a compositional bias: polar residues. Residue arginine 173 is modified to Asymmetric dimethylarginine. Positions 219–310 (ITTPGGTTRQ…SGSSQSSAHS (92 aa)) are disordered. Over residues 220–231 (TTPGGTTRQTQQ) the composition is skewed to low complexity. The segment covering 232–282 (HSGWVSQFNPMNPQQVYQPSQPGPWTTCPASNPLSHTSSQQPNQQGHQTSH) has biased composition (polar residues). Over residues 286–310 (PISSPTTSQPPTIHSSGSSQSSAHS) the composition is skewed to low complexity. A Glycyl lysine isopeptide (Lys-Gly) (interchain with G-Cter in SUMO) cross-link involves residue lysine 329. Positions 330–381 (LEPPQRNNSSKLRSSGPRTSSTSSSVNSQTLNRNQPTVYIAASPPNTDELMS) are disordered. Low complexity predominate over residues 343–359 (SSGPRTSSTSSSVNSQT). 4 positions are modified to phosphoserine: serine 372, serine 450, serine 482, and serine 524. The stretch at 532 to 619 (YTQALLVHQK…TKEIDLFQAR (88 aa)) forms a coiled coil. Residue lysine 562 forms a Glycyl lysine isopeptide (Lys-Gly) (interchain with G-Cter in SUMO) linkage. Serine 582 bears the Phosphoserine mark. Residue lysine 611 forms a Glycyl lysine isopeptide (Lys-Gly) (interchain with G-Cter in ubiquitin) linkage. The disordered stretch occupies residues 642 to 663 (PPKPKDQRSIIKTPKTQDTEDD). The segment at 663–693 (DEGAQWNCTACTFLNHPALIRCEQCEMPRHF) adopts a RanBP2-type zinc-finger fold. Cysteine 673 bears the (Microbial infection) S-methylcysteine mark. Residues 675–685 (FLNHPALIRCE) are interaction with polyubiquitin.

Interacts with MAP3K7 and TRAF6. Identified in the TRIKA2 complex composed of MAP3K7, TAB1 and TAB2. Binds 'Lys-63'-linked polyubiquitin chains. Interacts with NCOR1 and HDAC3 to form a ternary complex. Interacts (via C-terminal) with NUMBL (via PTB domain). Interacts (via the C-terminus) with DYNC2I2 (via WD domains). Interacts with RBCK1. Interacts with TRIM5. Interacts with TRIM38 (via B30.2/SPRY domain), leading to its translocation to lysosomes and degradation. Interacts with ASB1; this interaction promotes TAB2 stability. In terms of processing, degraded in a lysosome-dependent manner following interaction with TRIM38. Post-translationally, SUMOylated by TRIM60; leading to inhibition of MAPK/NF-kappaB activation and the innate immune response. Ubiquitinated; following IL1 stimulation or TRAF6 overexpression. Ubiquitination involves RBCK1 leading to proteasomal degradation. Ubiquitinated at Lys-611 by TRIM45 leading to proteasomal degradation. In terms of processing, phosphorylated. Post-translationally, (Microbial infection) Methylated at Cys-673 by enteropathogenic E.coli protein NleE or S.flexneri protein OspZ: methylation disrupts zinc-binding and ability to bind 'Lys-63'-linked ubiquitin, leading to NF-kappa-B inactivation. In terms of tissue distribution, widely expressed. In the embryo, expressed in the ventricular trabeculae, endothelial cells of the conotruncal cushions of the outflow tract and in the endothelial cells lining the developing aortic valves.

It is found in the membrane. Its subcellular location is the endosome membrane. It localises to the lysosome membrane. The protein resides in the cytoplasm. The protein localises to the cytosol. In terms of biological role, adapter required to activate the JNK and NF-kappa-B signaling pathways through the specific recognition of 'Lys-63'-linked polyubiquitin chains by its RanBP2-type zinc finger (NZF). Acts as an adapter linking MAP3K7/TAK1 and TRAF6 to 'Lys-63'-linked polyubiquitin chains. The RanBP2-type zinc finger (NZF) specifically recognizes Lys-63'-linked polyubiquitin chains unanchored or anchored to the substrate proteins such as RIPK1/RIP1 and RIPK2: this acts as a scaffold to organize a large signaling complex to promote autophosphorylation of MAP3K7/TAK1, and subsequent activation of I-kappa-B-kinase (IKK) core complex by MAP3K7/TAK1. Also recognizes and binds Lys-63'-linked polyubiquitin chains of heterotypic 'Lys-63'-/'Lys-48'-linked branched ubiquitin chains. Regulates the IL1-mediated translocation of NCOR1 out of the nucleus. Involved in heart development. This chain is TGF-beta-activated kinase 1 and MAP3K7-binding protein 2, found in Homo sapiens (Human).